The primary structure comprises 250 residues: Malonyl-[acyl-carrier protein] O-methyltransferase (250 aa).

This sequence belongs to the methyltransferase superfamily.

It carries out the reaction malonyl-[ACP] + S-adenosyl-L-methionine = malonyl-[ACP] methyl ester + S-adenosyl-L-homocysteine. It participates in cofactor biosynthesis; biotin biosynthesis. Converts the free carboxyl group of a malonyl-thioester to its methyl ester by transfer of a methyl group from S-adenosyl-L-methionine (SAM). It allows to synthesize pimeloyl-ACP via the fatty acid synthetic pathway. The polypeptide is Malonyl-[acyl-carrier protein] O-methyltransferase (Neorickettsia risticii (strain Illinois)).